The following is a 64-amino-acid chain: Cytochrome c oxidase subunit 5C-2 (64 aa).

A helical transmembrane segment spans residues 15–34 (SVVKELVIGTVLGLAAGGLW).

It belongs to the cytochrome c oxidase subunit 5C family.

It is found in the mitochondrion inner membrane. In terms of biological role, this protein is one of the nuclear-coded polypeptide chains of cytochrome c oxidase, the terminal oxidase in mitochondrial electron transport. The sequence is that of Cytochrome c oxidase subunit 5C-2 (COX5C2) from Helianthus annuus (Common sunflower).